Consider the following 711-residue polypeptide: Polyribonucleotide nucleotidyltransferase (711 aa).

The Mg(2+) site is built by Asp486 and Asp492. One can recognise a KH domain in the interval 553 to 612; that stretch reads PRIHTIKINPDKIKDVIGKGGSVIRALTEETGTTIEIEDDGTVKIAATDGEKAKHAIRRI. The 69-residue stretch at 622–690 folds into the S1 motif domain; it reads GRVYNGKVTR…RQGRIRLSIK (69 aa). The tract at residues 689–711 is disordered; it reads IKEATEQSQPAAAPEAPAAEQGE. Residues 694–711 show a composition bias toward low complexity; the sequence is EQSQPAAAPEAPAAEQGE.

Belongs to the polyribonucleotide nucleotidyltransferase family. In terms of assembly, component of the RNA degradosome, which is a multiprotein complex involved in RNA processing and mRNA degradation. Mg(2+) serves as cofactor.

The protein localises to the cytoplasm. The enzyme catalyses RNA(n+1) + phosphate = RNA(n) + a ribonucleoside 5'-diphosphate. Involved in mRNA degradation. Catalyzes the phosphorolysis of single-stranded polyribonucleotides processively in the 3'- to 5'-direction. This Escherichia coli O6:K15:H31 (strain 536 / UPEC) protein is Polyribonucleotide nucleotidyltransferase.